Here is a 507-residue protein sequence, read N- to C-terminus: Cobyric acid synthase (507 aa).

The GATase cobBQ-type domain maps to 259–456 (EIQIAVIKLP…LHGIFDNGTW (198 aa)). C340 (nucleophile) is an active-site residue. The active site involves H448.

It belongs to the CobB/CobQ family. CobQ subfamily.

It functions in the pathway cofactor biosynthesis; adenosylcobalamin biosynthesis. Functionally, catalyzes amidations at positions B, D, E, and G on adenosylcobyrinic A,C-diamide. NH(2) groups are provided by glutamine, and one molecule of ATP is hydrogenolyzed for each amidation. The protein is Cobyric acid synthase of Prochlorococcus marinus (strain SARG / CCMP1375 / SS120).